Consider the following 240-residue polypeptide: Tubulin alpha chain (240 aa).

Asn-17 lines the GTP pocket. Glu-43 is an active-site residue.

It belongs to the tubulin family. Dimer of alpha and beta chains. A typical microtubule is a hollow water-filled tube with an outer diameter of 25 nm and an inner diameter of 15 nM. Alpha-beta heterodimers associate head-to-tail to form protofilaments running lengthwise along the microtubule wall with the beta-tubulin subunit facing the microtubule plus end conferring a structural polarity. Microtubules usually have 13 protofilaments but different protofilament numbers can be found in some organisms and specialized cells. It depends on Mg(2+) as a cofactor. Post-translationally, undergoes a tyrosination/detyrosination cycle, the cyclic removal and re-addition of a C-terminal tyrosine residue by the enzymes tubulin tyrosine carboxypeptidase (TTCP) and tubulin tyrosine ligase (TTL), respectively.

The protein resides in the cytoplasm. It localises to the cytoskeleton. The enzyme catalyses GTP + H2O = GDP + phosphate + H(+). In terms of biological role, tubulin is the major constituent of microtubules, a cylinder consisting of laterally associated linear protofilaments composed of alpha- and beta-tubulin heterodimers. Microtubules grow by the addition of GTP-tubulin dimers to the microtubule end, where a stabilizing cap forms. Below the cap, tubulin dimers are in GDP-bound state, owing to GTPase activity of alpha-tubulin. The polypeptide is Tubulin alpha chain (Octopus vulgaris (Common octopus)).